We begin with the raw amino-acid sequence, 1249 residues long: Nuclear envelope pore membrane protein POM 121 (1249 aa).

The span at 1–10 (MSPAAAAAGA) shows a compositional bias: low complexity. The segment at 1-27 (MSPAAAAAGAGERRRPIASVRDGRGRG) is disordered. The interval 1 to 34 (MSPAAAAAGAGERRRPIASVRDGRGRGCGGPARA) is cisternal side. The tract at residues 1-285 (MSPAAAAAGA…APPDRRFSRS (285 aa)) is required for targeting to the nucleus and nuclear pore complex. Residues 11–25 (GERRRPIASVRDGRG) show a composition bias toward basic and acidic residues. Residues 35 to 55 (VLLGLSLVGLLLYLVPAAAAL) traverse the membrane as a helical segment. A pore side region spans residues 56–1249 (AWLTVGATAA…QARRQHTRKK (1194 aa)). Residue serine 94 is modified to Phosphoserine. Disordered stretches follow at residues 136-220 (LMGS…CGTL), 319-530 (KEKK…LGYS), 602-776 (KKMQ…PVFS), 959-986 (PLPS…AKPA), and 1226-1249 (IGAG…TRKK). Residues 168 to 190 (ARPAPRSPPPRSPPPRSPPPSPP) are compositionally biased toward pro residues. A phosphoserine mark is found at serine 345, serine 351, serine 371, serine 393, and serine 396. The segment covering 405–423 (IPSSSRNAITSSYSSTRGI) has biased composition (polar residues). Positions 432-445 (PSSSPFSSPASSRS) are enriched in low complexity. Composition is skewed to basic and acidic residues over residues 450 to 462 (RPAK…ELCH) and 472 to 486 (ADRE…DTTP). Positions 491–502 (NSNSQSTPGSSG) are enriched in polar residues. Residues 635-652 (PPLGLSQSGPPGLLPSPS) show a composition bias toward low complexity. Residues 683-696 (QAETATKPQATSAP) show a composition bias toward polar residues. 2 stretches are compositionally biased toward low complexity: residues 712–726 (SPSS…SAPP) and 749–770 (SVTA…TAPT). Residues 1239–1249 (LQARRQHTRKK) show a composition bias toward basic residues.

It belongs to the POM121 family.

The protein resides in the nucleus. It is found in the nuclear pore complex. It localises to the nucleus membrane. Its subcellular location is the endoplasmic reticulum membrane. In terms of biological role, essential component of the nuclear pore complex (NPC). The repeat-containing domain may be involved in anchoring components of the pore complex to the pore membrane. When overexpressed in cells induces the formation of cytoplasmic annulate lamellae (AL). In Homo sapiens (Human), this protein is Nuclear envelope pore membrane protein POM 121 (POM121).